Here is a 533-residue protein sequence, read N- to C-terminus: 2,3-bisphosphoglycerate-independent phosphoglycerate mutase (533 aa).

Positions 15 and 65 each coordinate Mn(2+). Serine 65 functions as the Phosphoserine intermediate in the catalytic mechanism. Substrate-binding positions include histidine 126, 156–157 (RD), arginine 188, arginine 194, 258–261 (RPDR), and lysine 331. Residues aspartate 398, histidine 402, aspartate 439, histidine 440, and histidine 457 each coordinate Mn(2+).

This sequence belongs to the BPG-independent phosphoglycerate mutase family. As to quaternary structure, monomer. It depends on Mn(2+) as a cofactor.

The enzyme catalyses (2R)-2-phosphoglycerate = (2R)-3-phosphoglycerate. It functions in the pathway carbohydrate degradation; glycolysis; pyruvate from D-glyceraldehyde 3-phosphate: step 3/5. Catalyzes the interconversion of 2-phosphoglycerate and 3-phosphoglycerate. This chain is 2,3-bisphosphoglycerate-independent phosphoglycerate mutase, found in Trichormus variabilis (strain ATCC 29413 / PCC 7937) (Anabaena variabilis).